We begin with the raw amino-acid sequence, 557 residues long: CTP synthase (557 aa).

The segment at 1–270 (MTKYVFVTGG…DAIICEELKL (270 aa)) is amidoligase domain. Residue Ser13 coordinates CTP. Ser13 lines the UTP pocket. Residues 14–19 (SLGKGI) and Asp71 each bind ATP. 2 residues coordinate Mg(2+): Asp71 and Glu144. Residues 151-153 (DIE), 191-196 (KTKPTQ), and Lys227 each bind CTP. Residues 191–196 (KTKPTQ) and Lys227 contribute to the UTP site. The Glutamine amidotransferase type-1 domain maps to 295–547 (TIGMVGKYVD…VEAALAHHEA (253 aa)). Gly356 is an L-glutamine binding site. The active-site Nucleophile; for glutamine hydrolysis is Cys383. Residues 384–387 (LGMQ), Glu407, and Arg473 contribute to the L-glutamine site. Catalysis depends on residues His520 and Glu522.

It belongs to the CTP synthase family. Homotetramer.

It catalyses the reaction UTP + L-glutamine + ATP + H2O = CTP + L-glutamate + ADP + phosphate + 2 H(+). The enzyme catalyses L-glutamine + H2O = L-glutamate + NH4(+). It carries out the reaction UTP + NH4(+) + ATP = CTP + ADP + phosphate + 2 H(+). It participates in pyrimidine metabolism; CTP biosynthesis via de novo pathway; CTP from UDP: step 2/2. Allosterically activated by GTP, when glutamine is the substrate; GTP has no effect on the reaction when ammonia is the substrate. The allosteric effector GTP functions by stabilizing the protein conformation that binds the tetrahedral intermediate(s) formed during glutamine hydrolysis. Inhibited by the product CTP, via allosteric rather than competitive inhibition. Functionally, catalyzes the ATP-dependent amination of UTP to CTP with either L-glutamine or ammonia as the source of nitrogen. Regulates intracellular CTP levels through interactions with the four ribonucleotide triphosphates. The protein is CTP synthase of Paraburkholderia phytofirmans (strain DSM 17436 / LMG 22146 / PsJN) (Burkholderia phytofirmans).